We begin with the raw amino-acid sequence, 396 residues long: Acetate kinase (396 aa).

Asn-7 contacts Mg(2+). Position 14 (Lys-14) interacts with ATP. Arg-88 is a binding site for substrate. The active-site Proton donor/acceptor is Asp-145. ATP is bound by residues 205-209 (HLGNG), 279-281 (DFR), and 327-331 (GIGEN). Glu-381 is a Mg(2+) binding site.

It belongs to the acetokinase family. Homodimer. The cofactor is Mg(2+). Mn(2+) is required as a cofactor.

It localises to the cytoplasm. It carries out the reaction acetate + ATP = acetyl phosphate + ADP. The protein operates within metabolic intermediate biosynthesis; acetyl-CoA biosynthesis; acetyl-CoA from acetate: step 1/2. Functionally, catalyzes the formation of acetyl phosphate from acetate and ATP. Can also catalyze the reverse reaction. The protein is Acetate kinase of Campylobacter jejuni subsp. jejuni serotype O:23/36 (strain 81-176).